The following is a 330-amino-acid chain: MVKFFQPKIDPLPTGIDLTGKTAVITGASAGMGLEVTKQLLRLRLSTAILAVRNVTKGEACIKSLLQDRGIQTHNPKPTIKVMELDMDRYDSVQQFAKTLREEVPVVDLLILNAGVASLNFERSPSGHERVTQVNYCSNVLLVAELLPHLEAGAEQTGSPARISWVGSRSHETPSFEKKAPIEADEGVLEHMDKEEAFVPFQRYNDTKLLCVLFLYSLAPRLDPKKVVINTMCPGMVNTGMSNMLPLHLRLIFNVIKAIRARPVEVGGWIILNAALVAGPESHGKFLADKTITDKSAIVTSPMGQDIQKKLWEETITEMSKLTTLPPQFR.

Positions 57, 86, 113, 204, and 208 each coordinate NADP(+). The active-site Proton donor is the Y204. K208 (lowers pKa of active site Tyr) is an active-site residue.

Belongs to the short-chain dehydrogenases/reductases (SDR) family.

It participates in secondary metabolite biosynthesis; terpenoid biosynthesis. In terms of biological role, short chain dehydrogenase; part of the gene cluster that mediates the biosynthesis of yanuthone D, a fungal isoprenoid epoxycyclohexenone that acts as an antibiotic against fungi and bacteria. The first step of the pathway is the synthesis of 6-methylsalicylic acid (6-MSA) by the polyketide synthase yanA. 6-MSA is then converted to m-cresol by the decarboxylase yanB. The cytochrome P450 monooxygenase yanC then catalyzes the oxidation of m-cresol to toluquinol. Epoxidation of toluquinol is then performed by the short chain dehydrogenase yanD, with the help of yanE, and a further prenylation by yanG leads to 7-deacetoxyyanuthone A. The next step is the hydroxylation of C-22 of 7-deacetoxyyanuthone A by the cytochrome P450 monooxygenase yanH to yield 22-deacetylyanuthone A. O-Mevalon transferase yanI then attaches mevalon to the hydroxyl group of 22-deacetylyanuthone A to produce yanuthone E. Finally, the FAD-dependent monooxygenase yanF oxidizes the hydroxyl group at C15 of yanuthone E to form yanuthone D. Furthermore, several branching points in the pathway lead to the production of yanuthones F and G from 7-deacetoxyyanuthone A; yanuthones H and I from 22-deacetylyanuthone A; and yanuthone J from yanuthone E. YanD is also involved in the synthesis of yanuthone X1 which does not have 6-methylsalicylic acid (6-MSA) as precursor. This chain is Short chain dehydrogenase yanD, found in Aspergillus niger (strain ATCC 1015 / CBS 113.46 / FGSC A1144 / LSHB Ac4 / NCTC 3858a / NRRL 328 / USDA 3528.7).